The chain runs to 317 residues: TPR repeat-containing thioredoxin TDX (317 aa).

The segment at Met1–Asp48 is disordered. Over residues Phe9–Asn29 the composition is skewed to acidic residues. TPR repeat units lie at residues Ala50–Ser83, Ile85–Ser117, and Lys119–Glu151. The 128-residue stretch at Glu189–Ser316 folds into the Thioredoxin domain. Active-site nucleophile residues include Cys242 and Cys245. Cys242 and Cys245 are oxidised to a cystine.

This sequence belongs to the thioredoxin family.

Its function is as follows. Probable thiol-disulfide oxidoreductase that may participate in various redox reactions and act as chaperone under heat shock. May interact with HSP70 proteins through the TPR repeats. The sequence is that of TPR repeat-containing thioredoxin TDX from Oryza sativa subsp. japonica (Rice).